We begin with the raw amino-acid sequence, 295 residues long: Ribose-phosphate pyrophosphokinase (295 aa).

ATP-binding positions include 46–48 (DGE) and 101–102 (RQ). His132 and Asp171 together coordinate Mg(2+). Lys194 is an active-site residue. D-ribose 5-phosphate-binding residues include Arg196 and Asp220.

Belongs to the ribose-phosphate pyrophosphokinase family. Class III (archaeal) subfamily. Requires Mg(2+) as cofactor.

The protein localises to the cytoplasm. It carries out the reaction D-ribose 5-phosphate + ATP = 5-phospho-alpha-D-ribose 1-diphosphate + AMP + H(+). The protein operates within metabolic intermediate biosynthesis; 5-phospho-alpha-D-ribose 1-diphosphate biosynthesis; 5-phospho-alpha-D-ribose 1-diphosphate from D-ribose 5-phosphate (route I): step 1/1. Involved in the biosynthesis of the central metabolite phospho-alpha-D-ribosyl-1-pyrophosphate (PRPP) via the transfer of pyrophosphoryl group from ATP to 1-hydroxyl of ribose-5-phosphate (Rib-5-P). In Methanosarcina mazei (strain ATCC BAA-159 / DSM 3647 / Goe1 / Go1 / JCM 11833 / OCM 88) (Methanosarcina frisia), this protein is Ribose-phosphate pyrophosphokinase.